Here is an 84-residue protein sequence, read N- to C-terminus: MKQGIHPEYHQVIFLDTTTNFKFLSGSTKTSSEMMEWEDGKEYPVIRLDISSDSHPFYTGRQKFAAADGRVERFNKKFGLKSNN.

This sequence belongs to the bacterial ribosomal protein bL31 family. Type B subfamily. In terms of assembly, part of the 50S ribosomal subunit.

The sequence is that of Large ribosomal subunit protein bL31B from Staphylococcus aureus (strain Mu3 / ATCC 700698).